The sequence spans 536 residues: CTP synthase (536 aa).

The interval 1–267 (MSKFVFVTGG…CKQTLNCLEL (267 aa)) is amidoligase domain. Ser13 lines the CTP pocket. A UTP-binding site is contributed by Ser13. ATP contacts are provided by residues 14-19 (SIGKGI) and Asp71. Mg(2+) contacts are provided by Asp71 and Glu141. CTP contacts are provided by residues 148 to 150 (DIE), 188 to 193 (KTKPTQ), and Lys224. UTP is bound by residues 188-193 (KTKPTQ) and Lys224. The region spanning 292–534 (KVALVGKYIE…IKASQEKLEQ (243 aa)) is the Glutamine amidotransferase type-1 domain. Residue Gly354 coordinates L-glutamine. Cys381 acts as the Nucleophile; for glutamine hydrolysis in catalysis. Residues 382–385 (LGMQ), Glu405, and Arg462 contribute to the L-glutamine site. Catalysis depends on residues His507 and Glu509.

The protein belongs to the CTP synthase family. Homotetramer.

It catalyses the reaction UTP + L-glutamine + ATP + H2O = CTP + L-glutamate + ADP + phosphate + 2 H(+). The enzyme catalyses L-glutamine + H2O = L-glutamate + NH4(+). It carries out the reaction UTP + NH4(+) + ATP = CTP + ADP + phosphate + 2 H(+). It functions in the pathway pyrimidine metabolism; CTP biosynthesis via de novo pathway; CTP from UDP: step 2/2. Its activity is regulated as follows. Allosterically activated by GTP, when glutamine is the substrate; GTP has no effect on the reaction when ammonia is the substrate. The allosteric effector GTP functions by stabilizing the protein conformation that binds the tetrahedral intermediate(s) formed during glutamine hydrolysis. Inhibited by the product CTP, via allosteric rather than competitive inhibition. In terms of biological role, catalyzes the ATP-dependent amination of UTP to CTP with either L-glutamine or ammonia as the source of nitrogen. Regulates intracellular CTP levels through interactions with the four ribonucleotide triphosphates. The protein is CTP synthase of Prochlorococcus marinus subsp. pastoris (strain CCMP1986 / NIES-2087 / MED4).